The chain runs to 288 residues: Phosphatidylglycerol--prolipoprotein diacylglyceryl transferase (288 aa).

Transmembrane regions (helical) follow at residues 8–28 (IGPIELHYYGLMYAIAFFVGI), 49–69 (AFVAIISGLIGGRLYYILFNL), 79–99 (ILAVWHGGMAIHGGILGGIAG), and 109–129 (INPLILGDFAAGPFILGQAIG). Position 130 (R130) interacts with a 1,2-diacyl-sn-glycero-3-phospho-(1'-sn-glycerol). 3 consecutive transmembrane segments (helical) span residues 203 to 223 (PAMLYELILNLIGFFIIWFIL), 232 to 252 (GYMWWWYIIIYSINRIIVSFF), and 259 to 279 (FFNFRAPHVISIILIAVSIFF).

The protein belongs to the Lgt family.

Its subcellular location is the cell inner membrane. The catalysed reaction is L-cysteinyl-[prolipoprotein] + a 1,2-diacyl-sn-glycero-3-phospho-(1'-sn-glycerol) = an S-1,2-diacyl-sn-glyceryl-L-cysteinyl-[prolipoprotein] + sn-glycerol 1-phosphate + H(+). Its pathway is protein modification; lipoprotein biosynthesis (diacylglyceryl transfer). Its function is as follows. Catalyzes the transfer of the diacylglyceryl group from phosphatidylglycerol to the sulfhydryl group of the N-terminal cysteine of a prolipoprotein, the first step in the formation of mature lipoproteins. This chain is Phosphatidylglycerol--prolipoprotein diacylglyceryl transferase, found in Fusobacterium nucleatum subsp. nucleatum (strain ATCC 25586 / DSM 15643 / BCRC 10681 / CIP 101130 / JCM 8532 / KCTC 2640 / LMG 13131 / VPI 4355).